The sequence spans 266 residues: Vesicle-associated protein 4-1 (266 aa).

A disordered region spans residues 28–57 (STTSSSSTQNPNQNYRSRHGNRNTDISAVS). One can recognise an MSP domain in the interval 76-199 (RLRLDPSSYL…VEQVLRVIFI (124 aa)). A coiled-coil region spans residues 200-228 (DADRPSAALEKLKRQLDEAEAAVEARKKP). Residues 219-229 (EAAVEARKKPP) show a composition bias toward basic and acidic residues. Residues 219 to 239 (EAAVEARKKPPPETGPRVVGE) form a disordered region. Ser-264 is modified (phosphoserine).

This sequence belongs to the VAMP-associated protein (VAP) (TC 9.B.17) family.

Its function is as follows. May play a role in vesicle trafficking. The chain is Vesicle-associated protein 4-1 (PVA41) from Arabidopsis thaliana (Mouse-ear cress).